The sequence spans 228 residues: ATP synthase subunit a 2 (228 aa).

6 helical membrane passes run 16–36 (VGTT…GAWL), 74–94 (VFPF…SSLI), 103–123 (DLSA…WFGI), 139–159 (SPFL…ALAV), 173–193 (LLVL…LHIV), and 194–214 (EALV…AGAI).

Belongs to the ATPase A chain family. In terms of assembly, F-type ATPases have 2 components, CF(1) - the catalytic core - and CF(0) - the membrane proton channel. CF(1) has five subunits: alpha(3), beta(3), gamma(1), delta(1), epsilon(1). CF(0) has three main subunits: a(1), b(2) and c(9-12). The alpha and beta chains form an alternating ring which encloses part of the gamma chain. CF(1) is attached to CF(0) by a central stalk formed by the gamma and epsilon chains, while a peripheral stalk is formed by the delta and b chains.

It localises to the cell inner membrane. In terms of biological role, key component of the proton channel; it plays a direct role in the translocation of protons across the membrane. The sequence is that of ATP synthase subunit a 2 from Pelobacter propionicus (strain DSM 2379 / NBRC 103807 / OttBd1).